A 205-amino-acid chain; its full sequence is Glycerol-3-phosphate acyltransferase (205 aa).

Over 1–3 (MSA) the chain is Periplasmic. A helical membrane pass occupies residues 4 to 24 (IAPGMILFAYLCGSISSAILV). Topologically, residues 25-52 (CRLCGLPDPRTSGSGNPGATNVLRMGGK) are cytoplasmic. A helical membrane pass occupies residues 53-73 (GAALAVLIFDVLKGMLPVWGA). Topologically, residues 74 to 80 (YELGVSP) are periplasmic. Residues 81-101 (FWLGLIAIAACLGHIWPIFFG) form a helical membrane-spanning segment. Residues 102-111 (FKGGKGVATA) lie on the Cytoplasmic side of the membrane. Residues 112 to 132 (FGAIAPIGWDLTGVMAGTWLL) form a helical membrane-spanning segment. Residues 133–137 (TVLLS) lie on the Periplasmic side of the membrane. The helical transmembrane segment at 138–158 (GYSSLGAIVSALIAPFYVWWF) threads the bilayer. The Cytoplasmic segment spans residues 159–205 (KPQFTFPVSMLSCLILLRHHDNIQRLWRRQETKIWTKLKRKREKDPE).

It belongs to the PlsY family. As to quaternary structure, probably interacts with PlsX.

It localises to the cell inner membrane. The catalysed reaction is sn-glycerol 3-phosphate + an acyl-CoA = a 1-acyl-sn-glycero-3-phosphate + CoA. It catalyses the reaction a fatty acyl-[ACP] + sn-glycerol 3-phosphate = a 1-acyl-sn-glycero-3-phosphate + holo-[ACP]. It functions in the pathway lipid metabolism; phospholipid metabolism. Functionally, catalyzes the transfer of an acyl group from acyl-ACP to glycerol-3-phosphate (G3P) to form lysophosphatidic acid (LPA). This enzyme can also utilize acyl-CoA as fatty acyl donor, but not acyl-PO(4). The chain is Glycerol-3-phosphate acyltransferase from Escherichia fergusonii (strain ATCC 35469 / DSM 13698 / CCUG 18766 / IAM 14443 / JCM 21226 / LMG 7866 / NBRC 102419 / NCTC 12128 / CDC 0568-73).